The chain runs to 114 residues: Small ribosomal subunit protein uS13m (114 aa).

Positions 92-114 are disordered; it reads DGLPLRGQRSHTNARTSRKRIRK.

Belongs to the universal ribosomal protein uS13 family. As to quaternary structure, part of the small ribosomal subunit.

Its subcellular location is the mitochondrion. Functionally, located at the top of the head of the small subunit, it contacts several helices of the 18S rRNA. This is Small ribosomal subunit protein uS13m (RPS13) from Oenothera berteroana (Bertero's evening primrose).